We begin with the raw amino-acid sequence, 557 residues long: UvrABC system protein C (557 aa).

Residues glutamate 14–valine 89 form the GIY-YIG domain. Residues glutamate 194 to valine 229 enclose the UVR domain.

The protein belongs to the UvrC family. In terms of assembly, interacts with UvrB in an incision complex.

The protein localises to the cytoplasm. In terms of biological role, the UvrABC repair system catalyzes the recognition and processing of DNA lesions. UvrC both incises the 5' and 3' sides of the lesion. The N-terminal half is responsible for the 3' incision and the C-terminal half is responsible for the 5' incision. The protein is UvrABC system protein C of Thermotoga petrophila (strain ATCC BAA-488 / DSM 13995 / JCM 10881 / RKU-1).